The chain runs to 406 residues: Tyrosine--tRNA ligase (406 aa).

Tyr35 contacts L-tyrosine. The 'HIGH' region motif lies at 40–49; that stretch reads ATSASLHIGH. L-tyrosine-binding residues include Tyr167 and Gln171. The short motif at 227–231 is the 'KMSKS' region element; sequence KMGKS. Lys230 provides a ligand contact to ATP. One can recognise an S4 RNA-binding domain in the interval 341–405; it reads ILLVDLMVLA…IGKKKILRIV (65 aa).

The protein belongs to the class-I aminoacyl-tRNA synthetase family. TyrS type 1 subfamily. Homodimer.

The protein localises to the cytoplasm. It catalyses the reaction tRNA(Tyr) + L-tyrosine + ATP = L-tyrosyl-tRNA(Tyr) + AMP + diphosphate + H(+). In terms of biological role, catalyzes the attachment of tyrosine to tRNA(Tyr) in a two-step reaction: tyrosine is first activated by ATP to form Tyr-AMP and then transferred to the acceptor end of tRNA(Tyr). This Borrelia recurrentis (strain A1) protein is Tyrosine--tRNA ligase.